Here is a 179-residue protein sequence, read N- to C-terminus: Transcription factor 21 (179 aa).

The segment at 20-86 is disordered; it reads CDGIKLDPNK…KQVQRNAANA (67 aa). Residues 34-46 show a composition bias toward polar residues; the sequence is SNDSNEESSTCDN. The segment covering 50–64 has biased composition (basic residues); sequence KKGRGTSGKRRKASS. A compositionally biased stretch (polar residues) spans 70-80; that stretch reads GTINQEGKQVQ. A bHLH domain is found at 79-131; the sequence is VQRNAANARERARMRVLSKAFSRLKTTLPWVPPDTKLSKLDTLRLASSYIAHL.

Efficient DNA binding requires dimerization with another bHLH protein. At the start of neurulation (stage 13), expressed in the pronephros. At tailbud stage (stage 25-28), expression is high in the anterior-most branchial arch and pronephric glomus. At stage 40, staining persists in the glomus and in the epicardium region of the heart, and at stage 42, expression is higher in the glomus than in the kidney tubule or duct. In adults, expression is highest in the rectum and the spleen, with significant expression in the duodenum, heart, kidney, lungs, pancreas, skin, liver and muscle.

It is found in the nucleus. Involved in epithelial-mesenchymal interactions in kidney and lung morphogenesis that include epithelial differentiation and branching morphogenesis. The protein is Transcription factor 21 (tcf21) of Xenopus laevis (African clawed frog).